Here is a 452-residue protein sequence, read N- to C-terminus: Trigger factor (452 aa).

Positions 169–254 constitute a PPIase FKBP-type domain; sequence GDQLLIDFVG…VQEVRAPVDG (86 aa).

Belongs to the FKBP-type PPIase family. Tig subfamily.

The protein resides in the cytoplasm. The enzyme catalyses [protein]-peptidylproline (omega=180) = [protein]-peptidylproline (omega=0). In terms of biological role, involved in protein export. Acts as a chaperone by maintaining the newly synthesized protein in an open conformation. Functions as a peptidyl-prolyl cis-trans isomerase. The sequence is that of Trigger factor (tig) from Caulobacter vibrioides (strain ATCC 19089 / CIP 103742 / CB 15) (Caulobacter crescentus).